Reading from the N-terminus, the 123-residue chain is uncharacterized protein (123 aa).

The signal sequence occupies residues 1 to 19; that stretch reads MKIKYFFIPLFSSAILFSA. Cys20 is lipidated: N-palmitoyl cysteine. Cys20 carries S-diacylglycerol cysteine lipidation.

The protein belongs to the MG439/MG440 family.

It is found in the cell membrane. This is an uncharacterized protein from Mycoplasma pneumoniae (strain ATCC 29342 / M129 / Subtype 1) (Mycoplasmoides pneumoniae).